We begin with the raw amino-acid sequence, 732 residues long: X-ray repair cross-complementing protein 5 (732 aa).

Positions 9-161 (AVVLCVDVGV…CNLKKSGISL (153 aa)) constitute a VWFA domain. The leucine-zipper stretch occupies residues 138-165 (LSSPFSQDQLDVIICNLKKSGISLQFFL). Residue K195 forms a Glycyl lysine isopeptide (Lys-Gly) (interchain with G-Cter in SUMO2) linkage. The region spanning 253 to 453 (IGPNLSIKIV…CTPTEAQLSA (201 aa)) is the Ku domain. S258 is subject to Phosphoserine. K265 is subject to N6-acetyllysine. S318 carries the phosphoserine modification. Residue K332 is modified to N6-acetyllysine. Residues K532 and K534 each participate in a glycyl lysine isopeptide (Lys-Gly) (interchain with G-Cter in SUMO2) cross-link. T535 is subject to Phosphothreonine. Glycyl lysine isopeptide (Lys-Gly) (interchain with G-Cter in SUMO2) cross-links involve residues K567 and K569. A phosphoserine; by PRKDC mark is found at S578, S580, and S581. Residue K666 is modified to N6-acetyllysine. Residues K670 and K689 each participate in a glycyl lysine isopeptide (Lys-Gly) (interchain with G-Cter in SUMO2) cross-link. Positions 708–732 (PKDKAKEDTTGPEEAGDVDDLLDMI) are disordered. T716 is modified (phosphothreonine; by PRKDC). The span at 717-732 (TGPEEAGDVDDLLDMI) shows a compositional bias: acidic residues. Residues 720 to 728 (EEAGDVDDL) carry the EEXXXDL motif motif.

The protein belongs to the ku80 family. Heterodimer composed of XRCC5/Ku80 and XRCC6/Ku70. Component of the core long-range non-homologous end joining (NHEJ) complex (also named DNA-PK complex) composed of PRKDC, LIG4, XRCC4, XRCC6/Ku70, XRCC5/Ku86 and NHEJ1/XLF. Additional component of the NHEJ complex includes PAXX. Following autophosphorylation, PRKDC dissociates from DNA, leading to formation of the short-range NHEJ complex, composed of LIG4, XRCC4, XRCC6/Ku70, XRCC5/Ku86 and NHEJ1/XLF. The XRCC5-XRCC6 dimer also associates with NAA15, and this complex displays DNA binding activity towards the osteocalcin FGF response element (OCFRE). In addition, XRCC5 binds to the osteoblast-specific transcription factors MSX2 and RUNX2. Interacts with ELF3. Interacts with APLF (via KBM motif). The XRCC5/XRCC6 dimer associates in a DNA-dependent manner with APEX1. Identified in a complex with DEAF1 and XRCC6. Interacts with NR4A3; the DNA-dependent protein kinase complex DNA-PK phosphorylates and activates NR4A3 and prevents NR4A3 ubiquitinylation and degradation. Interacts with RNF138. Interacts with CYREN (via KBM motif). Interacts with WRN (via KBM motif). Interacts (via N-terminus) with HSF1 (via N-terminus); this interaction is direct and prevents XRCC5/XRCC6 heterodimeric binding and non-homologous end joining (NHEJ) repair activities induced by ionizing radiation (IR). Interacts with DHX9; this interaction occurs in a RNA-dependent manner. Part of the HDP-RNP complex composed of at least HEXIM1, PRKDC, XRCC5, XRCC6, paraspeckle proteins (SFPQ, NONO, PSPC1, RBM14, and MATR3) and NEAT1 RNA. Interacts with ERCC6. Interacts with ATF7. The XRCC5-XRCC6 dimer associates with ALKBH2. Interacts with TPRN; TPRN interacts with a number of DNA damage response proteins, is recruited to sites of DNA damage and may play a role in DNA damage repair. Interacts with ERCC6L2. Post-translationally, ADP-ribosylated by PARP3. Phosphorylated on serine residues. Phosphorylation by PRKDC may enhance helicase activity. In terms of processing, sumoylated. Post-translationally, ubiquitinated by RNF8 via 'Lys-48'-linked ubiquitination following DNA damage, leading to its degradation and removal from DNA damage sites. Ubiquitinated by RNF138, leading to remove the Ku complex from DNA breaks.

The protein localises to the nucleus. Its subcellular location is the nucleolus. The protein resides in the chromosome. Functionally, single-stranded DNA-dependent ATP-dependent helicase that plays a key role in DNA non-homologous end joining (NHEJ) by recruiting DNA-PK to DNA. Required for double-strand break repair and V(D)J recombination. Also has a role in chromosome translocation. The DNA helicase II complex binds preferentially to fork-like ends of double-stranded DNA in a cell cycle-dependent manner. It works in the 3'-5' direction. During NHEJ, the XRCC5-XRRC6 dimer performs the recognition step: it recognizes and binds to the broken ends of the DNA and protects them from further resection. Binding to DNA may be mediated by XRCC6. The XRCC5-XRRC6 dimer acts as a regulatory subunit of the DNA-dependent protein kinase complex DNA-PK by increasing the affinity of the catalytic subunit PRKDC to DNA by 100-fold. The XRCC5-XRRC6 dimer is probably involved in stabilizing broken DNA ends and bringing them together. The assembly of the DNA-PK complex to DNA ends is required for the NHEJ ligation step. The XRCC5-XRRC6 dimer probably also acts as a 5'-deoxyribose-5-phosphate lyase (5'-dRP lyase), by catalyzing the beta-elimination of the 5' deoxyribose-5-phosphate at an abasic site near double-strand breaks. XRCC5 probably acts as the catalytic subunit of 5'-dRP activity, and allows to 'clean' the termini of abasic sites, a class of nucleotide damage commonly associated with strand breaks, before such broken ends can be joined. The XRCC5-XRRC6 dimer together with APEX1 acts as a negative regulator of transcription. In association with NAA15, the XRCC5-XRRC6 dimer binds to the osteocalcin promoter and activates osteocalcin expression. As part of the DNA-PK complex, involved in the early steps of ribosome assembly by promoting the processing of precursor rRNA into mature 18S rRNA in the small-subunit processome. Binding to U3 small nucleolar RNA, recruits PRKDC and XRCC5/Ku86 to the small-subunit processome. Plays a role in the regulation of DNA virus-mediated innate immune response by assembling into the HDP-RNP complex, a complex that serves as a platform for IRF3 phosphorylation and subsequent innate immune response activation through the cGAS-STING pathway. The sequence is that of X-ray repair cross-complementing protein 5 (Xrcc5) from Mus musculus (Mouse).